The primary structure comprises 138 residues: Phospholipase A2 homolog mojave toxin acidic chain (138 aa).

The N-terminal stretch at 1–40 is a signal peptide; sequence MRALWIVAVLLVGVEGSLVEFETLIMKIAGRSGISYYSSY. Intrachain disulfides connect Cys42/Cys131, Cys44/Cys60, Cys59/Cys111, Cys65/Cys138, Cys66/Cys104, Cys73/Cys97, and Cys91/Cys102. Positions 81-83 are excised as a propeptide; the sequence is TYR. Gln84 bears the Pyrrolidone carboxylic acid mark. A propeptide spanning residues 120 to 126 is cleaved from the precursor; the sequence is DYKYLRF.

It belongs to the phospholipase A2 family. Group II subfamily. D49 sub-subfamily. As to quaternary structure, heterodimer of an acidic and a basic chain. The acidic subunit is non-toxic, without enzymatic activity and comprises 3 peptides that are cross-linked by 5 disulfide bridges. The basic subunit is toxic, has phospholipase A2 activity and is composed of a single chain. Ca(2+) serves as cofactor. Expressed by the venom gland.

The protein localises to the secreted. Functionally, snake venom phospholipase A2 (PLA2) that inhibits neuromuscular transmission by blocking acetylcholine release from the nerve termini. The chain is Phospholipase A2 homolog mojave toxin acidic chain from Crotalus scutulatus scutulatus (Mojave rattlesnake).